A 213-amino-acid polypeptide reads, in one-letter code: Large ribosomal subunit protein uL3 (213 aa).

This sequence belongs to the universal ribosomal protein uL3 family. Part of the 50S ribosomal subunit. Forms a cluster with proteins L14 and L19.

Functionally, one of the primary rRNA binding proteins, it binds directly near the 3'-end of the 23S rRNA, where it nucleates assembly of the 50S subunit. The sequence is that of Large ribosomal subunit protein uL3 from Kosmotoga olearia (strain ATCC BAA-1733 / DSM 21960 / TBF 19.5.1).